We begin with the raw amino-acid sequence, 412 residues long: Lysosomal phospholipase A and acyltransferase (412 aa).

Residues 1–33 (MGLHLRPYRVGLLPDGLLFLLLLLMLLADPALP) form the signal peptide. Asp-46 serves as a coordination point for substrate. Cys-65 and Cys-89 are oxidised to a cystine. A glycan (N-linked (GlcNAc...) asparagine) is linked at Asn-99. Ser-198 serves as the catalytic Acyl-ester intermediate. Ser-198 contributes to the Zn(2+) binding site. Residue Met-199 coordinates substrate. Asn-273 and Asn-289 each carry an N-linked (GlcNAc...) asparagine glycan. Positions 340 and 355 each coordinate Zn(2+). Catalysis depends on charge relay system residues Asp-360 and His-392. His-392 is a binding site for Zn(2+). N-linked (GlcNAc...) asparagine glycosylation is present at Asn-398.

This sequence belongs to the AB hydrolase superfamily. Lipase family. Post-translationally, N-glycosylated. N-glycosylation is important for maturation of the enzyme and normal subcellular location. In terms of tissue distribution, detected in blood plasma (at protein level). Ubiquitous. Highly expressed in heart, placenta, skeletal muscle, kidney and pancreas. Detected at lower levels in spleen, thymus, prostate, testis, ovary, small intestine, colon and peripheral blood leukocytes.

The protein resides in the lysosome. It localises to the secreted. It is found in the membrane. The catalysed reaction is a 1,2-diacyl-sn-glycero-3-phosphocholine + H2O = a 2-acyl-sn-glycero-3-phosphocholine + a fatty acid + H(+). It carries out the reaction 1-hexadecanoyl-2-(9Z-octadecenoyl)-sn-glycero-3-phosphocholine + H2O = 2-(9Z-octadecenoyl)-sn-glycero-3-phosphocholine + hexadecanoate + H(+). The enzyme catalyses 1-hexadecanoyl-2-glutaroyl-sn-glycero-3-phosphocholine + H2O = 2-glutaroyl-sn-glycero-3-phosphocholine + hexadecanoate + H(+). It catalyses the reaction 1-hexadecanoyl-2-nonadioyl-sn-glycero-3-phosphocholine + H2O = 2-nonadioyl-sn-glycero-3-phosphocholine + hexadecanoate + H(+). The catalysed reaction is 1-hexadecanoyl-2-(5-oxopentanoyl)-sn-glycero-3-phosphocholine + H2O = 2-(5-oxopentanoyl)-sn-glycero-3-phosphocholine + hexadecanoate + H(+). It carries out the reaction 1-hexadecanoyl-2-(9-oxononanoyl)-sn-glycero-3-phosphocholine + H2O = 2-(9-oxononanoyl)-sn-glycero-3-phosphocholine + hexadecanoate + H(+). The enzyme catalyses 1,2-dihexadecanoyl-sn-glycero-3-phosphocholine + H2O = 2-hexadecanoyl-sn-glycero-3-phosphocholine + hexadecanoate + H(+). It catalyses the reaction a 1,2-diacyl-sn-glycero-3-phosphocholine + H2O = a 1-acyl-sn-glycero-3-phosphocholine + a fatty acid + H(+). The catalysed reaction is 1,2-di-(9Z-octadecenoyl)-sn-glycero-3-phosphocholine + H2O = 1-(9Z-octadecenoyl)-sn-glycero-3-phosphocholine + (9Z)-octadecenoate + H(+). It carries out the reaction 1-hexadecanoyl-2-(9Z-octadecenoyl)-sn-glycero-3-phosphocholine + H2O = 1-hexadecanoyl-sn-glycero-3-phosphocholine + (9Z)-octadecenoate + H(+). The enzyme catalyses 1,2-dihexadecanoyl-sn-glycero-3-phosphocholine + H2O = 1-hexadecanoyl-sn-glycero-3-phosphocholine + hexadecanoate + H(+). It catalyses the reaction a 1-acyl-sn-glycero-3-phosphocholine + H2O = sn-glycerol 3-phosphocholine + a fatty acid + H(+). The catalysed reaction is 1-hexadecanoyl-sn-glycero-3-phosphocholine + H2O = sn-glycerol 3-phosphocholine + hexadecanoate + H(+). It carries out the reaction N-(acetyl)-sphing-4-enine + a 1,2-diacyl-sn-glycero-3-phosphoethanolamine = 1-O-acyl-N-(acetyl)-sphing-4-enine + a 2-acyl-sn-glycero-3-phosphoethanolamine. The enzyme catalyses 1-hexadecanoyl-2-(9Z-octadecenoyl)-sn-glycero-3-phosphoethanolamine + N-(acetyl)-sphing-4-enine = 2-(9Z-octadecenoyl)-sn-glycero-3-phosphoethanolamine + 1-hexadecanoyl-N-(acetyl)-sphing-4-enine. It catalyses the reaction 1-hexadecanoyl-2-(9Z,12Z-octadecadienoyl)-sn-glycero-3-phosphoethanolamine + N-(acetyl)-sphing-4-enine = 2-(9Z,12Z)-octadecadienoyl-sn-glycero-3-phosphoethanolamine + 1-hexadecanoyl-N-(acetyl)-sphing-4-enine. The catalysed reaction is 1-hexadecanoyl-2-(5Z,8Z,11Z,14Z-eicosatetraenoyl)-sn-glycero-3-phosphoethanolamine + N-(acetyl)-sphing-4-enine = 2-(5Z,8Z,11Z,14Z)-eicosatetraenoyl-sn-glycero-3-phosphoethanolamine + 1-hexadecanoyl-N-(acetyl)-sphing-4-enine. It carries out the reaction N-(acetyl)-sphing-4-enine + a 1,2-diacyl-sn-glycero-3-phosphoethanolamine = 1-O-acyl-N-(acetyl)-sphing-4-enine + a 1-acyl-sn-glycero-3-phosphoethanolamine. The enzyme catalyses 1-hexadecanoyl-2-(9Z-octadecenoyl)-sn-glycero-3-phosphoethanolamine + N-(acetyl)-sphing-4-enine = 1-(9Z-octadecenoyl)-N-(acetyl)-sphing-4-enine + 1-hexadecanoyl-sn-glycero-3-phosphoethanolamine. It catalyses the reaction 1-hexadecanoyl-2-(9Z,12Z-octadecadienoyl)-sn-glycero-3-phosphoethanolamine + N-(acetyl)-sphing-4-enine = 1-(9Z,12Z-octadecadienoyl)-N-acetylsphing-4-enine + 1-hexadecanoyl-sn-glycero-3-phosphoethanolamine. The catalysed reaction is 1-hexadecanoyl-2-(5Z,8Z,11Z,14Z-eicosatetraenoyl)-sn-glycero-3-phosphoethanolamine + N-(acetyl)-sphing-4-enine = 1-(5Z,8Z,11Z,14Z)-eicosatetraenoyl-N-(acetyl)-sphing-4-enine + 1-hexadecanoyl-sn-glycero-3-phosphoethanolamine. It carries out the reaction N-(acetyl)-sphing-4-enine + a 1,2-diacyl-sn-glycero-3-phosphocholine = 1-O-acyl-N-(acetyl)-sphing-4-enine + a 1-acyl-sn-glycero-3-phosphocholine. The enzyme catalyses 1-hexadecanoyl-2-(9Z-octadecenoyl)-sn-glycero-3-phosphocholine + N-(acetyl)-sphing-4-enine = 1-(9Z-octadecenoyl)-N-(acetyl)-sphing-4-enine + 1-hexadecanoyl-sn-glycero-3-phosphocholine. It catalyses the reaction 1-hexadecanoyl-2-(9Z,12Z-octadecadienoyl)-sn-glycero-3-phosphocholine + N-(acetyl)-sphing-4-enine = 1-(9Z,12Z-octadecadienoyl)-N-acetylsphing-4-enine + 1-hexadecanoyl-sn-glycero-3-phosphocholine. The catalysed reaction is 1-hexadecanoyl-2-(5Z,8Z,11Z,14Z-eicosatetraenoyl)-sn-glycero-3-phosphocholine + N-(acetyl)-sphing-4-enine = 1-(5Z,8Z,11Z,14Z)-eicosatetraenoyl-N-(acetyl)-sphing-4-enine + 1-hexadecanoyl-sn-glycero-3-phosphocholine. It carries out the reaction 1-hexadecanoyl-2-(4Z,7Z,10Z,13Z,16Z,19Z-docosahexaenoyl)-sn-glycero-3-phosphocholine + N-(acetyl)-sphing-4-enine = 1-(4Z,7Z,10Z,13Z,16Z,19Z-docosahexaenoyl)-N-(acetyl)-sphing-4-enine + 1-hexadecanoyl-sn-glycero-3-phosphocholine. The enzyme catalyses 1-octadecanoyl-2-(9Z-octadecenoyl)-sn-glycero-3-phosphocholine + N-(acetyl)-sphing-4-enine = 1-(9Z-octadecenoyl)-N-(acetyl)-sphing-4-enine + 1-octadecanoyl-sn-glycero-3-phosphocholine. It catalyses the reaction 1-octadecanoyl-2-(9Z,12Z)-octadecadienoyl-sn-glycero-3-phosphocholine + N-(acetyl)-sphing-4-enine = 1-(9Z,12Z-octadecadienoyl)-N-acetylsphing-4-enine + 1-octadecanoyl-sn-glycero-3-phosphocholine. The catalysed reaction is 1-octadecanoyl-2-(5Z,8Z,11Z,14Z-eicosatetraenoyl)-sn-glycero-3-phosphocholine + N-(acetyl)-sphing-4-enine = 1-(5Z,8Z,11Z,14Z)-eicosatetraenoyl-N-(acetyl)-sphing-4-enine + 1-octadecanoyl-sn-glycero-3-phosphocholine. It carries out the reaction 1-(9Z-octadecenoyl)-2-hexadecanoyl-sn-glycero-3-phosphocholine + N-(acetyl)-sphing-4-enine = 1-hexadecanoyl-N-(acetyl)-sphing-4-enine + 1-(9Z-octadecenoyl)-sn-glycero-3-phosphocholine. The enzyme catalyses 1-(9Z)-octadecenoyl-2-octadecanoyl-sn-glycero-3-phosphocholine + N-(acetyl)-sphing-4-enine = 1-octadecanoyl-N-(acetyl)-sphing-4-enine + 1-(9Z-octadecenoyl)-sn-glycero-3-phosphocholine. It catalyses the reaction 1,2-di-(9Z-octadecenoyl)-sn-glycero-3-phosphocholine + N-(acetyl)-sphing-4-enine = 1-(9Z-octadecenoyl)-N-(acetyl)-sphing-4-enine + 1-(9Z-octadecenoyl)-sn-glycero-3-phosphocholine. The catalysed reaction is N-(acetyl)-sphing-4-enine + a 1,2-diacyl-sn-glycero-3-phosphocholine = 1-O-acyl-N-(acetyl)-sphing-4-enine + a 2-acyl-sn-glycero-3-phosphocholine. It carries out the reaction 1-hexadecanoyl-2-(9Z-octadecenoyl)-sn-glycero-3-phosphocholine + N-(acetyl)-sphing-4-enine = 1-hexadecanoyl-N-(acetyl)-sphing-4-enine + 2-(9Z-octadecenoyl)-sn-glycero-3-phosphocholine. The enzyme catalyses 1-hexadecanoyl-2-(9Z,12Z-octadecadienoyl)-sn-glycero-3-phosphocholine + N-(acetyl)-sphing-4-enine = 2-(9Z,12Z-octadecadienoyl)-sn-glycero-3-phosphocholine + 1-hexadecanoyl-N-(acetyl)-sphing-4-enine. It catalyses the reaction 1-hexadecanoyl-2-(5Z,8Z,11Z,14Z-eicosatetraenoyl)-sn-glycero-3-phosphocholine + N-(acetyl)-sphing-4-enine = 1-hexadecanoyl-N-(acetyl)-sphing-4-enine + 2-(5Z,8Z,11Z,14Z)-eicosatetraenoyl-sn-glycero-3-phosphocholine. The catalysed reaction is 1-hexadecanoyl-2-(4Z,7Z,10Z,13Z,16Z,19Z-docosahexaenoyl)-sn-glycero-3-phosphocholine + N-(acetyl)-sphing-4-enine = 2-(4Z,7Z,10Z,13Z,16Z,19Z-docosahexaenoyl)-sn-glycero-3-phosphocholine + 1-hexadecanoyl-N-(acetyl)-sphing-4-enine. It carries out the reaction 1-hexadecanoyl-2-nonadioyl-sn-glycero-3-phosphocholine + N-(acetyl)-sphing-4-enine = 2-nonadioyl-sn-glycero-3-phosphocholine + 1-hexadecanoyl-N-(acetyl)-sphing-4-enine. The enzyme catalyses 1-octadecanoyl-2-(9Z-octadecenoyl)-sn-glycero-3-phosphocholine + N-(acetyl)-sphing-4-enine = 1-octadecanoyl-N-(acetyl)-sphing-4-enine + 2-(9Z-octadecenoyl)-sn-glycero-3-phosphocholine. It catalyses the reaction 1-octadecanoyl-2-(5Z,8Z,11Z,14Z-eicosatetraenoyl)-sn-glycero-3-phosphocholine + N-(acetyl)-sphing-4-enine = 1-octadecanoyl-N-(acetyl)-sphing-4-enine + 2-(5Z,8Z,11Z,14Z)-eicosatetraenoyl-sn-glycero-3-phosphocholine. The catalysed reaction is 1-(9Z-octadecenoyl)-2-hexadecanoyl-sn-glycero-3-phosphocholine + N-(acetyl)-sphing-4-enine = 1-(9Z-octadecenoyl)-N-(acetyl)-sphing-4-enine + 2-hexadecanoyl-sn-glycero-3-phosphocholine. It carries out the reaction 1-(9Z)-octadecenoyl-2-octadecanoyl-sn-glycero-3-phosphocholine + N-(acetyl)-sphing-4-enine = 2-octadecanoyl-sn-glycero-3-phosphocholine + 1-(9Z-octadecenoyl)-N-(acetyl)-sphing-4-enine. The enzyme catalyses a 1,2-diacyl-sn-glycero-3-phospho-L-serine + N-(acetyl)-sphing-4-enine = a 2-acyl-sn-glycero-3-phospho-L-serine + 1-O-acyl-N-(acetyl)-sphing-4-enine. It catalyses the reaction 1-octadecanoyl-2-(9Z-octadecenoyl)-sn-glycero-3-phospho-L-serine + N-(acetyl)-sphing-4-enine = 2-(9Z-octadecenoyl)-sn-glycero-3-phospho-L-serine + 1-octadecanoyl-N-(acetyl)-sphing-4-enine. The catalysed reaction is a 1,2-diacyl-sn-glycero-3-phospho-L-serine + N-(acetyl)-sphing-4-enine = 1-O-acyl-N-(acetyl)-sphing-4-enine + a 1-acyl-sn-glycero-3-phospho-L-serine. It carries out the reaction 1-octadecanoyl-2-(9Z-octadecenoyl)-sn-glycero-3-phospho-L-serine + N-(acetyl)-sphing-4-enine = 1-octadecanoyl-sn-glycero-3-phosphoserine + 1-(9Z-octadecenoyl)-N-(acetyl)-sphing-4-enine. The enzyme catalyses a 1,2-diacyl-sn-glycero-3-phospho-(1'-sn-glycerol) + N-(acetyl)-sphing-4-enine = 2-acyl-sn-glycero-3-phospho-(1'-sn-glycerol) + 1-O-acyl-N-(acetyl)-sphing-4-enine. It catalyses the reaction 1-octadecanoyl-2-(9Z-octadecenoyl)-sn-glycero-3-phospho-(1'-sn-glycerol) + N-(acetyl)-sphing-4-enine = 2-(9Z-octadecenoyl)-sn-glycero-3-phospho-(1'-sn-glycerol) + 1-octadecanoyl-N-(acetyl)-sphing-4-enine. The catalysed reaction is a 1,2-diacyl-sn-glycero-3-phospho-(1'-sn-glycerol) + N-(acetyl)-sphing-4-enine = 1-O-acyl-N-(acetyl)-sphing-4-enine + 1-acyl-sn-glycero-3-phospho-(1'-sn-glycerol). It carries out the reaction 1-octadecanoyl-2-(9Z-octadecenoyl)-sn-glycero-3-phospho-(1'-sn-glycerol) + N-(acetyl)-sphing-4-enine = 1-octadecanoyl-sn-glycero-3-phospho-(1'-sn-glycerol) + 1-(9Z-octadecenoyl)-N-(acetyl)-sphing-4-enine. The enzyme catalyses an N-acylethanolamine + a 1,2-diacyl-sn-glycero-3-phosphocholine = 2-(acylamino)ethyl fatty acid + a 2-acyl-sn-glycero-3-phosphocholine. It catalyses the reaction an N-acylethanolamine + a 1,2-diacyl-sn-glycero-3-phosphocholine = 2-(acylamino)ethyl fatty acid + a 1-acyl-sn-glycero-3-phosphocholine. The catalysed reaction is N-(5Z,8Z,11Z,14Z-eicosatetraenoyl)-ethanolamine + 1,2-di-(9Z-octadecenoyl)-sn-glycero-3-phosphocholine = 2-[(5Z,8Z,11Z,14Z)-eicosatetraenoylamino]ethyl (9Z)-octadecenoate + (9Z-octadecenoyl)-sn-glycero-3-phosphocholine. It carries out the reaction N-(9Z-octadecenoyl) ethanolamine + 1,2-di-(9Z-octadecenoyl)-sn-glycero-3-phosphocholine = 2-[(9Z)-octadecenoylamino]ethyl (9Z)-octadecenoate + (9Z-octadecenoyl)-sn-glycero-3-phosphocholine. The enzyme catalyses a 3-acyl-sn-glycerol + a 1,2-diacyl-sn-glycero-3-phosphocholine = a 1,3-diacylglycerol + a 1-acyl-sn-glycero-3-phosphocholine. It catalyses the reaction a 3-acyl-sn-glycerol + a 1,2-diacyl-sn-glycero-3-phosphocholine = a 1,3-diacylglycerol + a 2-acyl-sn-glycero-3-phosphocholine. The catalysed reaction is 3-(9Z-octadecenoyl)-sn-glycerol + 1,2-di-(9Z-octadecenoyl)-sn-glycero-3-phosphocholine = 1,3-di-(9Z-octadecenoyl)-glycerol + (9Z-octadecenoyl)-sn-glycero-3-phosphocholine. It carries out the reaction 3-hexadecanoyl-sn-glycerol + 1,2-di-(9Z-octadecenoyl)-sn-glycero-3-phosphocholine = 1-(9Z)-octadecenoyl-3-hexadecanoyl-sn-glycerol + (9Z-octadecenoyl)-sn-glycero-3-phosphocholine. The enzyme catalyses a 1-acyl-sn-glycerol + a 1,2-diacyl-sn-glycero-3-phosphocholine = a 1,3-diacylglycerol + a 2-acyl-sn-glycero-3-phosphocholine. It catalyses the reaction a 1-acyl-sn-glycerol + a 1,2-diacyl-sn-glycero-3-phosphocholine = a 1,3-diacylglycerol + a 1-acyl-sn-glycero-3-phosphocholine. The catalysed reaction is 1-(9Z-octadecenoyl)-sn-glycerol + 1,2-di-(9Z-octadecenoyl)-sn-glycero-3-phosphocholine = 1,3-di-(9Z-octadecenoyl)-glycerol + (9Z-octadecenoyl)-sn-glycero-3-phosphocholine. It carries out the reaction 1-hexadecanoyl-sn-glycerol + 1,2-di-(9Z-octadecenoyl)-sn-glycero-3-phosphocholine = 1-hexadecanoyl-3-(9Z)-octadecenoyl-sn-glycerol + (9Z-octadecenoyl)-sn-glycero-3-phosphocholine. The enzyme catalyses a 2-acylglycerol + a 1,2-diacyl-sn-glycero-3-phosphocholine = a 1,2-diacylglycerol + a 2-acyl-sn-glycero-3-phosphocholine. It catalyses the reaction a 2-acylglycerol + a 1,2-diacyl-sn-glycero-3-phosphocholine = a 1,2-diacylglycerol + a 1-acyl-sn-glycero-3-phosphocholine. The catalysed reaction is 2-hexadecanoylglycerol + 1,2-di-(9Z-octadecenoyl)-sn-glycero-3-phosphocholine = 1-(9Z)-octadecenoyl-2-hexadecanoylglycerol + (9Z-octadecenoyl)-sn-glycero-3-phosphocholine. It carries out the reaction 1-O-alkylglycerol + a 1,2-diacyl-sn-glycero-3-phosphocholine = 1-O-alkyl-3-acylglycerol + a 1-acyl-sn-glycero-3-phosphocholine. The enzyme catalyses 1-O-alkylglycerol + a 1,2-diacyl-sn-glycero-3-phosphocholine = 1-O-alkyl-3-acylglycerol + a 2-acyl-sn-glycero-3-phosphocholine. It catalyses the reaction 1-O-hexadecylglycerol + 1,2-di-(9Z-octadecenoyl)-sn-glycero-3-phosphocholine = 1-O-hexadecyl-3-(9Z)-octadecenoylglycerol + (9Z-octadecenoyl)-sn-glycero-3-phosphocholine. The catalysed reaction is 1-O-alkyl-2-acyl-sn-glycerol + a 1,2-diacyl-sn-glycero-3-phosphocholine = 1-O-alkyl-2,3-diacyl-sn-glycerol + a 2-acyl-sn-glycero-3-phosphocholine. It carries out the reaction 1-O-alkyl-2-acyl-sn-glycerol + a 1,2-diacyl-sn-glycero-3-phosphocholine = 1-O-alkyl-2,3-diacyl-sn-glycerol + a 1-acyl-sn-glycero-3-phosphocholine. The enzyme catalyses 1-O-hexadecyl-2-acetyl-sn-glycerol + 1,2-di-(9Z-octadecenoyl)-sn-glycero-3-phosphocholine = 1-O-hexadecyl-2-acetyl-3-(9Z)-octadecenoyl-sn-glycerol + (9Z-octadecenoyl)-sn-glycero-3-phosphocholine. It catalyses the reaction 1-O-hexadecyl-2-O-methyl-sn-glycerol + 1,2-di-(9Z-octadecenoyl)-sn-glycero-3-phosphocholine = 1-O-hexadecyl-2-O-methyl-3-(9Z)-octadecenoyl-sn-glycerol + (9Z-octadecenoyl)-sn-glycero-3-phosphocholine. The catalysed reaction is a 1,2-diacyl-sn-glycero-3-phosphoethanolamine + H2O = a 1-acyl-sn-glycero-3-phosphoethanolamine + a fatty acid + H(+). It carries out the reaction 1-acyl-2-(5Z,8Z,11Z,14Z)-eicosatetraenoyl-sn-glycero-3-phosphoethanolamine + H2O = a 1-acyl-sn-glycero-3-phosphoethanolamine + (5Z,8Z,11Z,14Z)-eicosatetraenoate + H(+). The enzyme catalyses a 1,2-diacyl-sn-glycero-3-phospho-(1'-sn-glycerol) + H2O = 1-acyl-sn-glycero-3-phospho-(1'-sn-glycerol) + a fatty acid + H(+). It catalyses the reaction 1-hexadecanoyl-2-(9Z-octadecenoyl)-sn-glycero-3-phospho-(1'-sn-glycerol) + H2O = 1-hexadecanoyl-sn-glycero-3-phospho-(1'-sn-glycerol) + (9Z)-octadecenoate + H(+). The catalysed reaction is a 1,2-diacyl-sn-glycero-3-phospho-(1'-sn-glycerol) + H2O = 2-acyl-sn-glycero-3-phospho-(1'-sn-glycerol) + a fatty acid + H(+). It carries out the reaction 1-hexadecanoyl-2-(9Z-octadecenoyl)-sn-glycero-3-phospho-(1'-sn-glycerol) + H2O = 2-(9Z-octadecenoyl)-sn-glycero-3-phospho-(1'-sn-glycerol) + hexadecanoate + H(+). Inhibited by zinc ions at neutral pH. Zinc ions in plasma may keep the enzyme from hydrolyzing inappropriate substrates. Its function is as follows. Has dual calcium-independent phospholipase and O-acyltransferase activities with a potential role in glycerophospholipid homeostasis and remodeling of acyl groups of lipophilic alcohols present in acidic cellular compartments. Catalyzes hydrolysis of the ester bond of the fatty acyl group attached at sn-1 or sn-2 position of phospholipids (phospholipase A1 or A2 activity) and transfer it to the hydroxyl group at the first carbon of lipophilic alcohols (O-acyltransferase activity). Among preferred fatty acyl donors are phosphatidylcholines, phosphatidylethanolamines, phosphatidylglycerols and phosphatidylserines. Favors sn-2 over sn-1 deacylation of unsaturated fatty acyl groups of phosphatidylcholines, phosphatidylethanolamines, and phosphatidylglycerols. Among preferred fatty acyl acceptors are natural lipophilic alcohols including short-chain ceramide N-acetyl-sphingosine (C2 ceramide), alkylacylglycerols, monoacylglycerols, and acylethanolamides such as anandamide and oleoylethanolamide. Selectively hydrolyzes the sn-1 fatty acyl group of truncated oxidized phospholipids and may play a role in detoxification of reactive oxidized phospholipids during oxidative stress. Required for normal phospholipid degradation in alveolar macrophages with potential implications in the clearance of pulmonary surfactant, which is mainly composed of dipalmitoylphosphatidylcholine (1,2-dihexadecanoyl-sn-glycero-3-phosphocholine). Involved in the first step of bis(monoacylglycero)phosphate (BMP) de novo synthesis from phosphatidylglycerol (1,2-diacyl-sn-glycero-3-phospho-(1'-sn-glycerol), PG). BMP is an important player in cargo sorting and degradation, regulation of cellular cholesterol levels and intercellular communication. At neutral pH, hydrolyzes the sn-1 fatty acyl group of the lysophosphatidylcholines. This Homo sapiens (Human) protein is Lysosomal phospholipase A and acyltransferase.